A 288-amino-acid polypeptide reads, in one-letter code: Ribosomal RNA small subunit methyltransferase A (288 aa).

Positions 28, 30, 55, 77, 103, and 123 each coordinate S-adenosyl-L-methionine.

It belongs to the class I-like SAM-binding methyltransferase superfamily. rRNA adenine N(6)-methyltransferase family. RsmA subfamily.

The protein localises to the cytoplasm. The enzyme catalyses adenosine(1518)/adenosine(1519) in 16S rRNA + 4 S-adenosyl-L-methionine = N(6)-dimethyladenosine(1518)/N(6)-dimethyladenosine(1519) in 16S rRNA + 4 S-adenosyl-L-homocysteine + 4 H(+). Specifically dimethylates two adjacent adenosines (A1518 and A1519) in the loop of a conserved hairpin near the 3'-end of 16S rRNA in the 30S particle. May play a critical role in biogenesis of 30S subunits. This chain is Ribosomal RNA small subunit methyltransferase A, found in Xanthobacter autotrophicus (strain ATCC BAA-1158 / Py2).